The following is a 336-amino-acid chain: MLYRLARTGFFQLDAEKAHDLAIKNFQRFNGTPLDLFYRQQLPNRPVECMGLTFRNPVGLAAGLDKNGECIEAFDAMGFGFVEVGTVTPRPQPGNDKPRLFRLVEAEGIINRMGFNNLGVDHLVENVKKAKFNCVLGINIGKNKDTPIENGAEDYLICMEKVYEYAGYIAVNISSPNTPGLRSLQYGEALDELLSELKAKQSELAEKHGKYVPLALKIAPDLSDDEITQICESLLKNNIDGVIATNTTLDRTVVEGMKHANEAGGLSGRPVQSRSTEVVRKLHEALGDKLPIIGVGGIDSYVAAKEKMMAGAQLVQVYTGFIYHGPGLVRDIVKNL.

Residues 62-66 and Thr-86 each bind FMN; that span reads AGLDK. Lys-66 contributes to the substrate binding site. A substrate-binding site is contributed by 111-115; it reads NRMGF. Positions 139 and 172 each coordinate FMN. Asn-172 is a binding site for substrate. The active-site Nucleophile is Ser-175. Asn-177 is a binding site for substrate. FMN-binding residues include Lys-217 and Thr-245. A substrate-binding site is contributed by 246–247; it reads NT. Residues Gly-268, Gly-297, and 318 to 319 each bind FMN; that span reads YT.

This sequence belongs to the dihydroorotate dehydrogenase family. Type 2 subfamily. As to quaternary structure, monomer. FMN is required as a cofactor.

It is found in the cell membrane. The catalysed reaction is (S)-dihydroorotate + a quinone = orotate + a quinol. Its pathway is pyrimidine metabolism; UMP biosynthesis via de novo pathway; orotate from (S)-dihydroorotate (quinone route): step 1/1. In terms of biological role, catalyzes the conversion of dihydroorotate to orotate with quinone as electron acceptor. This is Dihydroorotate dehydrogenase (quinone) from Vibrio parahaemolyticus serotype O3:K6 (strain RIMD 2210633).